Consider the following 217-residue polypeptide: tRNA (guanine-N(7)-)-methyltransferase (217 aa).

Positions 44, 69, 96, and 118 each coordinate S-adenosyl-L-methionine. Residue Asp-118 is part of the active site. Lys-122 provides a ligand contact to substrate. An interaction with RNA region spans residues Arg-124 to Arg-129. Residues Asp-154 and Thr-193–Glu-196 each bind substrate.

Belongs to the class I-like SAM-binding methyltransferase superfamily. TrmB family.

It carries out the reaction guanosine(46) in tRNA + S-adenosyl-L-methionine = N(7)-methylguanosine(46) in tRNA + S-adenosyl-L-homocysteine. It participates in tRNA modification; N(7)-methylguanine-tRNA biosynthesis. Functionally, catalyzes the formation of N(7)-methylguanine at position 46 (m7G46) in tRNA. This Lactococcus lactis subsp. cremoris (strain SK11) protein is tRNA (guanine-N(7)-)-methyltransferase.